The sequence spans 146 residues: Hemoglobin subunit beta (146 aa).

V1 is subject to N-acetylvaline. The region spanning 2–146 is the Globin domain; sequence HLTPEEKNAV…VANALAHKYH (145 aa). A Phosphothreonine modification is found at T12. A Phosphoserine modification is found at S44. K59 carries the N6-acetyllysine modification. H63 is a heme b binding site. K82 carries the N6-acetyllysine modification. A heme b-binding site is contributed by H92. C93 is subject to S-nitrosocysteine. At K144 the chain carries N6-acetyllysine.

This sequence belongs to the globin family. As to quaternary structure, heterotetramer of two alpha chains and two beta chains. As to expression, red blood cells.

Involved in oxygen transport from the lung to the various peripheral tissues. The polypeptide is Hemoglobin subunit beta (HBB) (Theropithecus gelada (Gelada baboon)).